We begin with the raw amino-acid sequence, 125 residues long: Small ribosomal subunit protein uS12 (125 aa).

The tract at residues 1 to 31 (MPTINQLVRHGRQTEVTKSKSPAMQGGPQRR) is disordered. Position 89 is a 3-methylthioaspartic acid (aspartate 89). The interval 105 to 125 (QGVKDRKQSRSKYGAKRPKKA) is disordered. Basic residues predominate over residues 113–125 (SRSKYGAKRPKKA).

It belongs to the universal ribosomal protein uS12 family. In terms of assembly, part of the 30S ribosomal subunit. Contacts proteins S8 and S17. May interact with IF1 in the 30S initiation complex.

Functionally, with S4 and S5 plays an important role in translational accuracy. Interacts with and stabilizes bases of the 16S rRNA that are involved in tRNA selection in the A site and with the mRNA backbone. Located at the interface of the 30S and 50S subunits, it traverses the body of the 30S subunit contacting proteins on the other side and probably holding the rRNA structure together. The combined cluster of proteins S8, S12 and S17 appears to hold together the shoulder and platform of the 30S subunit. This Methylibium petroleiphilum (strain ATCC BAA-1232 / LMG 22953 / PM1) protein is Small ribosomal subunit protein uS12.